The sequence spans 802 residues: LPS-assembly protein LptD (802 aa).

Positions Met1–Ala25 are cleaved as a signal peptide.

This sequence belongs to the LptD family. In terms of assembly, component of the lipopolysaccharide transport and assembly complex. Interacts with LptE and LptA.

Its subcellular location is the cell outer membrane. Functionally, together with LptE, is involved in the assembly of lipopolysaccharide (LPS) at the surface of the outer membrane. The protein is LPS-assembly protein LptD of Neisseria meningitidis serogroup B (strain ATCC BAA-335 / MC58).